Here is a 455-residue protein sequence, read N- to C-terminus: Beta-cyclopiazonate dehydrogenase (455 aa).

The signal sequence occupies residues 1–20; the sequence is MATRIASFIGISTVASLALA.

It belongs to the beta-cyclopiazonate dehydrogenase family. It depends on FAD as a cofactor.

It catalyses the reaction beta-cyclopiazonate + A = alpha-cyclopiazonate + AH2. Its function is as follows. Beta-cyclopiazonate dehydrogenase involved in the synthesis of the fungal neurotoxin alpha-cyclopiazonic acid (CPA). CpaO carries out the dehydrogenation of beta-CPA to yield an unstable enimine product, which is captured by intramolecular cyclization to create the pentacyclic fused scaffold of alpha-cyclopiazonate. In Aspergillus flavus (strain ATCC 200026 / FGSC A1120 / IAM 13836 / NRRL 3357 / JCM 12722 / SRRC 167), this protein is Beta-cyclopiazonate dehydrogenase.